Reading from the N-terminus, the 98-residue chain is Integration host factor subunit alpha (98 aa).

Positions asparagine 51–isoleucine 71 are disordered. Residues aspartate 53 to glutamate 69 show a composition bias toward basic and acidic residues.

This sequence belongs to the bacterial histone-like protein family. As to quaternary structure, heterodimer of an alpha and a beta chain.

Functionally, this protein is one of the two subunits of integration host factor, a specific DNA-binding protein that functions in genetic recombination as well as in transcriptional and translational control. The sequence is that of Integration host factor subunit alpha from Vibrio campbellii (strain ATCC BAA-1116).